The primary structure comprises 464 residues: MSSRSTKDLIKSKWGSKPSNSKSETTLEKLKGEIAHLKTSVDEITSGKGKLTDKERHRLLEKIRVLEAEKEKNAYQLTEKDKEIQRLRDQLKARYSTTTLLEQLEETTREGERREQVLKALSEEKDVLKQQLSAATSRIAELESKTNTLRLSQTVAPNCFNSSINNIHEMEIQLKDALEKNQQWLVYDQQREVYVKGLLAKIFELEKKTETAAHSLPQQTKKPESEGYLQEEKQKCYNDLLASAKKDLEVERQTITQLSFELSEFRRKYEETQKEVHNLNQLLYSQRRADVQHLEDDRHKTEKIQKLREENDIARGKLEEEKKRSEELLSQVQFLYTSLLKQQEEQTRVALLEQQMQACTLDFENEKLDRQHVQHQLHVILKELRKARNQITQLESLKQLHEFAITEPLVTFQGETENREKVAASPKSPTAALNESLVECPKCNIQYPATEHRDLLVHVEYCSK.

Positions 1–11 (MSSRSTKDLIK) are enriched in basic and acidic residues. Residues 1–26 (MSSRSTKDLIKSKWGSKPSNSKSETT) form a disordered region. 3 coiled-coil regions span residues 22 to 186 (KSET…QWLV), 238 to 337 (NDLL…FLYT), and 374 to 403 (QHQL…LHEF). Position 96 is a phosphoserine (Ser-96). The tract at residues 157 to 236 (PNCFNSSINN…GYLQEEKQKC (80 aa)) is interaction with TSG101. Residues 160-214 (FNSSINNIHEMEIQLKDALEKNQQWLVYDQQREVYVKGLLAKIFELEKKTETAAH) form an interaction with PDCD6IP region. Residues 355–464 (QMQACTLDFE…LLVHVEYCSK (110 aa)) are required for localization to the interphase centrosome and to the midbody during cytokinesis. Residues Ser-425 and Ser-428 each carry the phosphoserine; by CDK1 and MAPK1 modification. Phosphothreonine is present on Thr-430. Ser-436 bears the Phosphoserine; by PLK1 mark.

In terms of assembly, homodimer. Interacts (phosphorylated on Ser-425 and Ser-428) with PLK1; the interaction is indirect via the MTMR3:MTMR4 heterooligomer, occurs during early mitosis, regulates the phosphorylation of CEP55 by PLK1 and its recruitment to the midbody where it can mediate cell abscission. Interacts with AKAP9/CG-NAP; the interaction occurs in interphase and is lost upon mitotic entry. Interacts with PCNT/Kendrin; the interaction occurs in interphase and is lost upon mitotic entry. Directly interacts with PDCD6IP; this interaction is required for PDCD6IP targeting to the midbody; CEP55 binds PDCD6IP in a 2:1 stoichiometry; PDCD6IP competes with TSG101 for the same binding site. Interacts with TSG101; TSG101 competes with PDCD6IP for the same binding site; interaction is required for cytokinesis but not for viral budding. Interacts with MVB12A, VPS37B, VPS37C and VPS28. There is a hierachy of phosphorylation, where both Ser-425 and Ser-428 are phosphorylated at the onset of mitosis, prior to Ser-436. Phosphorylation at Ser-425 and Ser-428 is required for dissociation from the centrosome at the G2/M boundary. Phosphorylation at the 3 sites, Ser-425, Ser-428 and Ser-436, is required for protein function at the final stages of cell division to complete cytokinesis successfully. As to expression, expressed in embryonic brain. Expressed in fetal brain ganglionic eminence, kidney tubules and multinucleate neurons in the temporal cortex. Expressed in adult brain, cerebellum, kidney tubules, intestine and muscles (at protein level). Widely expressed, mostly in proliferative tissues. Highly expressed in testis. Intermediate levels in adult and fetal thymus, as well as in various cancer cell lines. Low levels in different parts of the digestive tract, bone marrow, lymph nodes, placenta, fetal heart and fetal spleen. Hardly detected in brain.

The protein resides in the cytoplasm. It localises to the cytoskeleton. It is found in the microtubule organizing center. Its subcellular location is the centrosome. The protein localises to the centriole. The protein resides in the cleavage furrow. It localises to the midbody. It is found in the midbody ring. Functionally, plays a role in mitotic exit and cytokinesis. Recruits PDCD6IP and TSG101 to midbody during cytokinesis. Required for successful completion of cytokinesis. Not required for microtubule nucleation. Plays a role in the development of the brain and kidney. This Homo sapiens (Human) protein is Centrosomal protein of 55 kDa.